Here is a 257-residue protein sequence, read N- to C-terminus: MQPIEQPGTGPDDITPESQDTNTAESAESGAETGHPRRIRSFVRRAGRTSTGQQRAINELGPRFQLPYTTEPLDWDAAFGRAGAKRIFEIGFGMGETTAHIAQLRPDDDFLGVEVHEPGVGALLKLIGEREIGNIRIVSHDAVEVLAQMIPEGTLDGIHVFFPDPWHKKRHNKRRLIQSPFVARLAAHLKPGGYLHCATDWEEYAHQMLEVLSSEPTLENTADGFAPRPDYRPVTKFEKRGLRLGHGVWDVVFRKRG.

Positions 1–58 are disordered; the sequence is MQPIEQPGTGPDDITPESQDTNTAESAESGAETGHPRRIRSFVRRAGRTSTGQQRAIN. A compositionally biased stretch (polar residues) spans 16 to 26; that stretch reads PESQDTNTAES. The segment covering 36–47 has biased composition (basic residues); sequence PRRIRSFVRRAG. Glu-89, Glu-114, Asp-141, and Asp-164 together coordinate S-adenosyl-L-methionine. Residue Asp-164 is part of the active site. Lys-168 is a binding site for substrate. The interaction with RNA stretch occupies residues 170 to 175; sequence RHNKRR. Substrate-binding positions include Asp-200 and 235 to 238; that span reads TKFE.

This sequence belongs to the class I-like SAM-binding methyltransferase superfamily. TrmB family.

The enzyme catalyses guanosine(46) in tRNA + S-adenosyl-L-methionine = N(7)-methylguanosine(46) in tRNA + S-adenosyl-L-homocysteine. The protein operates within tRNA modification; N(7)-methylguanine-tRNA biosynthesis. Catalyzes the formation of N(7)-methylguanine at position 46 (m7G46) in tRNA. The chain is tRNA (guanine-N(7)-)-methyltransferase from Ralstonia pickettii (strain 12J).